The following is a 38-amino-acid chain: Toxin Bcg III 31.16 (38 aa).

Disulfide bonds link Cys-4-Cys-37, Cys-6-Cys-30, and Cys-20-Cys-38.

Belongs to the sea anemone type 3 (BDS) potassium channel toxin family.

The protein localises to the secreted. Its subcellular location is the nematocyst. In terms of biological role, possible modulator of crustacean voltage-gated sodium channels (Nav). The chain is Toxin Bcg III 31.16 from Bunodosoma cangicum (Sea anemone).